The sequence spans 122 residues: Large ribosomal subunit protein uL14 (122 aa).

Belongs to the universal ribosomal protein uL14 family. In terms of assembly, part of the 50S ribosomal subunit. Forms a cluster with proteins L3 and L19. In the 70S ribosome, L14 and L19 interact and together make contacts with the 16S rRNA in bridges B5 and B8.

In terms of biological role, binds to 23S rRNA. Forms part of two intersubunit bridges in the 70S ribosome. The chain is Large ribosomal subunit protein uL14 from Streptomyces avermitilis (strain ATCC 31267 / DSM 46492 / JCM 5070 / NBRC 14893 / NCIMB 12804 / NRRL 8165 / MA-4680).